Consider the following 151-residue polypeptide: Small ribosomal subunit protein uS15 (151 aa).

Belongs to the universal ribosomal protein uS15 family.

The polypeptide is Small ribosomal subunit protein uS15 (RPS13) (Wuchereria bancrofti).